The following is a 478-amino-acid chain: Proline--tRNA ligase (478 aa).

The protein belongs to the class-II aminoacyl-tRNA synthetase family. ProS type 3 subfamily. In terms of assembly, homodimer.

It localises to the cytoplasm. The catalysed reaction is tRNA(Pro) + L-proline + ATP = L-prolyl-tRNA(Pro) + AMP + diphosphate. Its function is as follows. Catalyzes the attachment of proline to tRNA(Pro) in a two-step reaction: proline is first activated by ATP to form Pro-AMP and then transferred to the acceptor end of tRNA(Pro). The chain is Proline--tRNA ligase from Clostridium novyi (strain NT).